The primary structure comprises 211 residues: Phosphoheptose isomerase (211 aa).

One can recognise an SIS domain in the interval 50 to 211 (IAGTFEDGGK…VERMLGYCRL (162 aa)). Residue 65–67 (NGG) participates in substrate binding. Positions 74 and 78 each coordinate Zn(2+). Residues Glu78, 109 to 110 (ND), 135 to 137 (STS), Ser140, and Gln188 contribute to the substrate site. Zn(2+) is bound by residues Gln188 and His196.

Belongs to the SIS family. GmhA subfamily. It depends on Zn(2+) as a cofactor.

It is found in the cytoplasm. The catalysed reaction is 2 D-sedoheptulose 7-phosphate = D-glycero-alpha-D-manno-heptose 7-phosphate + D-glycero-beta-D-manno-heptose 7-phosphate. It functions in the pathway carbohydrate biosynthesis; D-glycero-D-manno-heptose 7-phosphate biosynthesis; D-glycero-alpha-D-manno-heptose 7-phosphate and D-glycero-beta-D-manno-heptose 7-phosphate from sedoheptulose 7-phosphate: step 1/1. In terms of biological role, catalyzes the isomerization of sedoheptulose 7-phosphate in D-glycero-D-manno-heptose 7-phosphate. The protein is Phosphoheptose isomerase of Pelodictyon phaeoclathratiforme (strain DSM 5477 / BU-1).